A 423-amino-acid polypeptide reads, in one-letter code: Glucose-1-phosphate adenylyltransferase (423 aa).

Alpha-D-glucose 1-phosphate-binding positions include Tyr-112, Gly-177, 192-193 (EK), and Ser-210.

The protein belongs to the bacterial/plant glucose-1-phosphate adenylyltransferase family. In terms of assembly, homotetramer.

The catalysed reaction is alpha-D-glucose 1-phosphate + ATP + H(+) = ADP-alpha-D-glucose + diphosphate. Its pathway is glycan biosynthesis; glycogen biosynthesis. In terms of biological role, involved in the biosynthesis of ADP-glucose, a building block required for the elongation reactions to produce glycogen. Catalyzes the reaction between ATP and alpha-D-glucose 1-phosphate (G1P) to produce pyrophosphate and ADP-Glc. The protein is Glucose-1-phosphate adenylyltransferase of Rhodospirillum rubrum (strain ATCC 11170 / ATH 1.1.1 / DSM 467 / LMG 4362 / NCIMB 8255 / S1).